The following is a 502-amino-acid chain: Sulfate adenylyltransferase (502 aa).

The segment at 1–167 (MPSPHGGVLQ…LEAIQLPVHY (167 aa)) is N-terminal. The catalytic stretch occupies residues 168–393 (DYPGWRKTPA…LRESNPSRPK (226 aa)). A sulfate-binding site is contributed by Q195. ATP is bound by residues 195–198 (QTRN) and 289–292 (GRDH). Catalysis depends on residues T196, R197, and N198. A sulfate-binding site is contributed by R197. A293 is a binding site for sulfate. V331 is a binding site for ATP. Residues 394 to 502 (QGFALVLSET…FLEDQGFFQF (109 aa)) are required for oligomerization; adenylyl-sulfate kinase-like.

The protein belongs to the sulfate adenylyltransferase family. In terms of assembly, homohexamer. Dimer of trimers.

The protein localises to the cytoplasm. It catalyses the reaction sulfate + ATP + H(+) = adenosine 5'-phosphosulfate + diphosphate. It functions in the pathway sulfur metabolism; hydrogen sulfide biosynthesis; sulfite from sulfate: step 1/3. In terms of biological role, catalyzes the first intracellular reaction of sulfate assimilation, forming adenosine-5'-phosphosulfate (APS) from inorganic sulfate and ATP. Plays an important role in sulfate activation as a component of the biosynthesis pathway of sulfur-containing amino acids. This chain is Sulfate adenylyltransferase, found in Kluyveromyces lactis (strain ATCC 8585 / CBS 2359 / DSM 70799 / NBRC 1267 / NRRL Y-1140 / WM37) (Yeast).